Reading from the N-terminus, the 92-residue chain is Putative septation protein SpoVG (92 aa).

The protein belongs to the SpoVG family.

In terms of biological role, could be involved in septation. In Thermoanaerobacter sp. (strain X514), this protein is Putative septation protein SpoVG.